Here is a 467-residue protein sequence, read N- to C-terminus: Acetyl-CoA decarbonylase/synthase complex subunit beta (467 aa).

Residues C193, C196, C282, and C284 each contribute to the [Ni-Fe-S] cluster site. The disordered stretch occupies residues 403 to 428 (RWAEEEEEEEEKAPEEEAPAEEPTME). A compositionally biased stretch (acidic residues) spans 405–426 (AEEEEEEEEKAPEEEAPAEEPT).

Belongs to the CdhC family. As to quaternary structure, monomer. The ACDS complex is made up of alpha, epsilon, beta, gamma and delta chains with a probable stoichiometry of (alpha(2)epsilon(2))(4)-beta(8)-(gamma(1)delta(1))(8). [Ni-Fe-S] cluster is required as a cofactor.

It catalyses the reaction Co(I)-[corrinoid Fe-S protein] + acetyl-CoA + H(+) = methyl-Co(III)-[corrinoid Fe-S protein] + CO + CoA. Its function is as follows. Part of a complex that catalyzes the reversible cleavage of acetyl-CoA, allowing autotrophic growth from CO(2). The alpha-epsilon complex generates CO from CO(2), while the beta subunit (this protein) combines the CO with CoA and a methyl group to form acetyl-CoA. The methyl group, which is incorporated into acetyl-CoA, is transferred to the beta subunit by a corrinoid iron-sulfur protein (the gamma-delta complex). This is Acetyl-CoA decarbonylase/synthase complex subunit beta from Methanopyrus kandleri (strain AV19 / DSM 6324 / JCM 9639 / NBRC 100938).